Here is a 238-residue protein sequence, read N- to C-terminus: COMM domain-containing protein 10 homolog Vlet (238 aa).

The segment covering 43–77 (ASASATSSTVGTSVTTTGRVDSSTEENPTSNTEPE) has biased composition (low complexity). The disordered stretch occupies residues 43–78 (ASASATSSTVGTSVTTTGRVDSSTEENPTSNTEPEY). Positions 161 to 225 (VIEDVAWKLN…SIQGELDAML (65 aa)) constitute a COMM domain.

The protein belongs to the COMM domain-containing protein 10 family. In terms of assembly, component of the commander complex consisting of the CCC subcomplex and the retriever subcomplex. Component of the CCC subcomplex. Interacts with Smn; along with Sbat and Hez may form an accessory subcomplex involved in SMN complex function.

Its function is as follows. Scaffold protein in the commander complex that is essential for endosomal recycling of transmembrane cargos; the commander complex is composed of the CCC subcomplex and the retriever subcomplex. May modulate activity of cullin-RING E3 ubiquitin ligase (CRL) complexes. May down-regulate activation of NF-kappa-B. May have an accessory function in the survival motor neuron (SMN) complex. Required for neuromuscular function and organismal viability. This chain is COMM domain-containing protein 10 homolog Vlet, found in Drosophila melanogaster (Fruit fly).